A 391-amino-acid chain; its full sequence is Esterase (391 aa).

The first 26 residues, 1–26 (MEFPETNNNPIITLSFLLCMLSLAYA), serve as a signal peptide directing secretion. The active-site Nucleophile is the Ser41. N-linked (GlcNAc...) asparagine glycosylation is found at Asn186, Asn193, and Asn313. Catalysis depends on residues Asp347 and His350.

This sequence belongs to the 'GDSL' lipolytic enzyme family. In terms of processing, the N-terminus is blocked. Post-translationally, glycosylated.

In terms of biological role, has lipase and esterase activities. May be involved in plant defense. This is Esterase from Hevea brasiliensis (Para rubber tree).